Reading from the N-terminus, the 65-residue chain is Large ribosomal subunit protein bL35 (65 aa).

It belongs to the bacterial ribosomal protein bL35 family.

In Thermoanaerobacter sp. (strain X514), this protein is Large ribosomal subunit protein bL35.